The following is a 39-amino-acid chain: Cytochrome b6-f complex subunit 5 (39 aa).

Residues 5 to 25 traverse the membrane as a helical segment; it reads LLCGIVLGLVPITLLGLFVSA.

It belongs to the PetG family. In terms of assembly, the 4 large subunits of the cytochrome b6-f complex are cytochrome b6, subunit IV (17 kDa polypeptide, PetD), cytochrome f and the Rieske protein, while the 4 small subunits are PetG, PetL, PetM and PetN. The complex functions as a dimer.

It is found in the cellular thylakoid membrane. Component of the cytochrome b6-f complex, which mediates electron transfer between photosystem II (PSII) and photosystem I (PSI), cyclic electron flow around PSI, and state transitions. PetG is required for either the stability or assembly of the cytochrome b6-f complex. The polypeptide is Cytochrome b6-f complex subunit 5 (Prochlorococcus marinus (strain MIT 9301)).